Reading from the N-terminus, the 202-residue chain is Ras-related protein RABD2c (202 aa).

GTP is bound by residues 15-23 (GDSGVGKSC), 33-40 (YLDSYIST), 63-67 (DTAGQ), 121-124 (NKCD), and 151-153 (SAK). Positions 37 to 45 (YISTIGVDF) match the Effector region motif. The interval 174–202 (ASQPAGGSKPPTVQIRGQPVNQQSGCCSS) is disordered. Positions 192–202 (PVNQQSGCCSS) are enriched in polar residues. 2 S-geranylgeranyl cysteine lipidation sites follow: Cys-199 and Cys-200.

The protein belongs to the small GTPase superfamily. Rab family.

The protein localises to the cell membrane. Its subcellular location is the golgi apparatus. The protein resides in the trans-Golgi network membrane. It localises to the golgi apparatus membrane. In terms of biological role, protein transport. Regulator of membrane traffic from the Golgi apparatus towards the endoplasmic reticulum (ER). This is Ras-related protein RABD2c (RABD2C) from Arabidopsis thaliana (Mouse-ear cress).